The following is a 251-amino-acid chain: Probable transcriptional regulatory protein NFA_37020 (251 aa).

This sequence belongs to the TACO1 family.

It localises to the cytoplasm. This is Probable transcriptional regulatory protein NFA_37020 from Nocardia farcinica (strain IFM 10152).